The primary structure comprises 143 residues: Large ribosomal subunit protein uL13 (143 aa).

It belongs to the universal ribosomal protein uL13 family. In terms of assembly, part of the 50S ribosomal subunit.

Functionally, this protein is one of the early assembly proteins of the 50S ribosomal subunit, although it is not seen to bind rRNA by itself. It is important during the early stages of 50S assembly. This is Large ribosomal subunit protein uL13 from Prochlorococcus marinus (strain MIT 9312).